An 896-amino-acid chain; its full sequence is UPF0182 protein GM21_2279 (896 aa).

A run of 7 helical transmembrane segments spans residues 6–26 (MTFI…LLSF), 46–66 (VYAQ…FLQL), 99–119 (LVRP…GNWG), 158–180 (LLKS…AYYV), 201–221 (LAVL…LESF), 245–265 (TLRI…LGIW), and 271–291 (LALG…RVYP).

Belongs to the UPF0182 family.

It is found in the cell membrane. In Geobacter sp. (strain M21), this protein is UPF0182 protein GM21_2279.